Here is a 331-residue protein sequence, read N- to C-terminus: Major ferric iron-binding protein (331 aa).

An N-terminal signal peptide occupies residues 1-22; it reads MKTSIRYALLAAALTAATPALA. Residues histidine 31, glutamate 79, tyrosine 217, and tyrosine 218 each coordinate Fe cation.

The protein belongs to the bacterial solute-binding protein 1 family.

The protein resides in the periplasm. In terms of biological role, this protein may be a central component in the iron-acquisition system. The chain is Major ferric iron-binding protein (fbpA) from Neisseria meningitidis serogroup B (strain ATCC BAA-335 / MC58).